The following is a 1081-amino-acid chain: FHF complex subunit HOOK-interacting protein 1A (1081 aa).

Disordered stretches follow at residues 474-496, 544-623, 658-770, and 863-883; these read SEEQ…PPPA, PETF…DPPK, EKDT…ENEP, and EAGS…RHPV. The span at 486-496 shows a compositional bias: pro residues; it reads PSSPSPPPPPA. Over residues 553–564 the composition is skewed to basic and acidic residues; sequence EESRENSGHPEA. Polar residues predominate over residues 567-576; the sequence is PQQSVRTSGQ. Positions 680 to 707 are enriched in acidic residues; that stretch reads EPLEDTSEQQEDTSEQLEDTSELQEDTA. Polar residues-rich tracts occupy residues 727-738 and 746-762; these read EAQSLPTSNGPL and ESQP…NTFS.

The protein belongs to the FHIP family. May be a component of the FTS/Hook/FHIP complex (FHF complex), composed of AKTIP/FTS, FHIP1B, and one or more members of the Hook family of proteins HOOK1, HOOK2, and HOOK3. May interact directly with AKTIP/FTS.

Its function is as follows. Probable component of the FTS/Hook/FHIP complex (FHF complex). FHF complex promotes the distribution of AP-4 complex to the perinuclear area of the cell. This is FHF complex subunit HOOK-interacting protein 1A from Mus musculus (Mouse).